The sequence spans 285 residues: Ribose-phosphate pyrophosphokinase (285 aa).

ATP contacts are provided by residues D34–E36 and R91–Q92. Residues H124 and D162 each contribute to the Mg(2+) site. Residue K185 is part of the active site. Residues R187, D211, and S215–T219 contribute to the D-ribose 5-phosphate site.

Belongs to the ribose-phosphate pyrophosphokinase family. Class III (archaeal) subfamily. The cofactor is Mg(2+).

Its subcellular location is the cytoplasm. The enzyme catalyses D-ribose 5-phosphate + ATP = 5-phospho-alpha-D-ribose 1-diphosphate + AMP + H(+). Its pathway is metabolic intermediate biosynthesis; 5-phospho-alpha-D-ribose 1-diphosphate biosynthesis; 5-phospho-alpha-D-ribose 1-diphosphate from D-ribose 5-phosphate (route I): step 1/1. In terms of biological role, involved in the biosynthesis of the central metabolite phospho-alpha-D-ribosyl-1-pyrophosphate (PRPP) via the transfer of pyrophosphoryl group from ATP to 1-hydroxyl of ribose-5-phosphate (Rib-5-P). This is Ribose-phosphate pyrophosphokinase from Pyrococcus abyssi (strain GE5 / Orsay).